Consider the following 107-residue polypeptide: Phosphoribosyl-ATP pyrophosphatase (107 aa).

It belongs to the PRA-PH family.

The protein localises to the cytoplasm. It carries out the reaction 1-(5-phospho-beta-D-ribosyl)-ATP + H2O = 1-(5-phospho-beta-D-ribosyl)-5'-AMP + diphosphate + H(+). It functions in the pathway amino-acid biosynthesis; L-histidine biosynthesis; L-histidine from 5-phospho-alpha-D-ribose 1-diphosphate: step 2/9. The protein is Phosphoribosyl-ATP pyrophosphatase (hisE) of Clostridium tetani (strain Massachusetts / E88).